The sequence spans 509 residues: Glycerol kinase (509 aa).

An ADP-binding site is contributed by Thr17. Positions 17, 18, and 19 each coordinate ATP. Sn-glycerol 3-phosphate is bound at residue Thr17. Residue Arg21 coordinates ADP. Sn-glycerol 3-phosphate-binding residues include Arg87, Glu88, Tyr139, and Asp256. Residues Arg87, Glu88, Tyr139, Asp256, and Gln257 each contribute to the glycerol site. Residues Thr278 and Gly322 each coordinate ADP. Residues Thr278, Gly322, Gln326, and Ala423 each contribute to the ATP site. Ala423 and Asn427 together coordinate ADP.

It belongs to the FGGY kinase family.

The enzyme catalyses glycerol + ATP = sn-glycerol 3-phosphate + ADP + H(+). Its pathway is polyol metabolism; glycerol degradation via glycerol kinase pathway; sn-glycerol 3-phosphate from glycerol: step 1/1. Inhibited by fructose 1,6-bisphosphate (FBP). Functionally, key enzyme in the regulation of glycerol uptake and metabolism. Catalyzes the phosphorylation of glycerol to yield sn-glycerol 3-phosphate. This Corynebacterium glutamicum (strain R) protein is Glycerol kinase.